We begin with the raw amino-acid sequence, 96 residues long: Co-chaperonin GroES (96 aa).

Belongs to the GroES chaperonin family. In terms of assembly, heptamer of 7 subunits arranged in a ring. Interacts with the chaperonin GroEL.

The protein resides in the cytoplasm. Together with the chaperonin GroEL, plays an essential role in assisting protein folding. The GroEL-GroES system forms a nano-cage that allows encapsulation of the non-native substrate proteins and provides a physical environment optimized to promote and accelerate protein folding. GroES binds to the apical surface of the GroEL ring, thereby capping the opening of the GroEL channel. This is Co-chaperonin GroES from Cupriavidus necator (strain ATCC 17699 / DSM 428 / KCTC 22496 / NCIMB 10442 / H16 / Stanier 337) (Ralstonia eutropha).